The following is a 569-amino-acid chain: Cytochrome P450 monooxygenase abl1 (569 aa).

A heme-binding site is contributed by Cys464.

It belongs to the cytochrome P450 family. Heme is required as a cofactor.

It functions in the pathway hormone biosynthesis. Functionally, cytochrome P450 monooxygenase; part of the gene cluster that mediates the biosynthesis of abscisic acid (ABA), a phytohormone that acts antagonistically toward salicylic acid (SA), jasmonic acid (JA) and ethylene (ETH) signaling, to impede plant defense responses. The first step of the pathway catalyzes the reaction from farnesyl diphosphate to alpha-ionylideneethane performed by the alpha-ionylideneethane synthase abl3 via a three-step reaction mechanism involving 2 neutral intermediates, beta-farnesene and allofarnesene. The cytochrome P450 monooxygenase abl1 might then be involved in the conversion of alpha-ionylideneethane to alpha-ionylideneacetic acid. Alpha-ionylideneacetic acid is further converted to abscisic acid in 2 steps involving the cytochrome P450 monooxygenase abl2 and the short-chain dehydrogenase/reductase abl4, via the intermediates 1'-deoxy-ABA or 1',4'-trans-diol-ABA, depending on the order of action of these 2 enzymes. Abl2 is responsible for the hydroxylation of carbon atom C-1' and abl4 might be involved in the oxidation of the C-4' carbon atom. The polypeptide is Cytochrome P450 monooxygenase abl1 (Leptosphaeria maculans (strain JN3 / isolate v23.1.3 / race Av1-4-5-6-7-8) (Blackleg fungus)).